The chain runs to 235 residues: Hydroxyacylglutathione hydrolase (235 aa).

The Zn(2+) site is built by His53, His55, Asp57, His58, His109, Asp127, and His165.

This sequence belongs to the metallo-beta-lactamase superfamily. Glyoxalase II family. As to quaternary structure, monomer. The cofactor is Zn(2+).

The enzyme catalyses an S-(2-hydroxyacyl)glutathione + H2O = a 2-hydroxy carboxylate + glutathione + H(+). It functions in the pathway secondary metabolite metabolism; methylglyoxal degradation; (R)-lactate from methylglyoxal: step 2/2. Its function is as follows. Thiolesterase that catalyzes the hydrolysis of S-D-lactoyl-glutathione to form glutathione and D-lactic acid. The polypeptide is Hydroxyacylglutathione hydrolase (Glaesserella parasuis serovar 5 (strain SH0165) (Haemophilus parasuis)).